A 583-amino-acid chain; its full sequence is 15-cis-phytoene desaturase, chloroplastic/chromoplastic (583 aa).

The transit peptide at 1–111 (MPQIGLVSAV…FRASPRPTKP (111 aa)) directs the protein to the chloroplast and chromoplast. FAD is bound by residues 118-134 (GAGLGGLSTAKYLADAG), 141-142 (EA), lysine 149, 166-167 (HI), and tyrosine 172. Arginine 307 is a binding site for substrate. 2 residues coordinate FAD: isoleucine 349 and aspartate 538. Alanine 546 is a substrate binding site. FAD is bound at residue methionine 548.

This sequence belongs to the carotenoid/retinoid oxidoreductase family. Homotetramer. Requires FAD as cofactor.

It is found in the plastid. The protein localises to the chloroplast. The protein resides in the chromoplast. It localises to the membrane. It catalyses the reaction 2 a plastoquinone + 15-cis-phytoene = 9,9',15-tri-cis-zeta-carotene + 2 a plastoquinol. It participates in carotenoid biosynthesis; lycopene biosynthesis. In terms of biological role, converts phytoene into zeta-carotene via the intermediary of phytofluene by the symmetrical introduction of two double bonds at the C-11 and C-11' positions of phytoene with a concomitant isomerization of two neighboring double bonds at the C9 and C9' positions from trans to cis. This Solanum lycopersicum (Tomato) protein is 15-cis-phytoene desaturase, chloroplastic/chromoplastic (PDS).